Here is a 360-residue protein sequence, read N- to C-terminus: MPLSRLLINNFRNLQAIDLELSPDFNFIVGHNGSGKTSLLEAIFYLGHGRSFKSHISNRIIHHHAENFVLHSKIDETQHQWSVGLQKNRAGDTLLKINGEDGKKIADLAHLLPMQVITPEGLTLLNGGPSYRRAFLDWGLFHQHLEFYSYWANLKRLLKQRNAALPQVKSYSELKAWDIELVRLAHLVTKMRTEYAEALRPEIEKTCRFFLPELPIRVSFHQGWENGADYADVLRQGFERDQNIGYTMVGPQKADFRFKANGLPVEDVLSRGQLKLLMCALRLAQGEYLVTQKKRQCLFLIDDFASELDPMKRELLAHRLRETGSQVFVTAITAEQLNQMHWQEYAQDKLFHLKEGKLKT.

30-37 lines the ATP pocket; the sequence is GHNGSGKT.

This sequence belongs to the RecF family.

It is found in the cytoplasm. In terms of biological role, the RecF protein is involved in DNA metabolism; it is required for DNA replication and normal SOS inducibility. RecF binds preferentially to single-stranded, linear DNA. It also seems to bind ATP. The protein is DNA replication and repair protein RecF of Haemophilus ducreyi (strain 35000HP / ATCC 700724).